The following is a 126-amino-acid chain: Fluoride-specific ion channel FluC 1 (126 aa).

4 consecutive transmembrane segments (helical) span residues 5-25, 39-59, 69-89, and 100-120; these read FILAVAAGGSLGSVARYLVGI, TLFINITGSLLIGLFAGLFAI, IFLIVGICGGYTTFSTFSLDS, and AAGAYMIASVVLSVGALIAGI. 2 residues coordinate Na(+): G77 and T80.

The protein belongs to the fluoride channel Fluc/FEX (TC 1.A.43) family.

Its subcellular location is the cell inner membrane. The enzyme catalyses fluoride(in) = fluoride(out). With respect to regulation, na(+) is not transported, but it plays an essential structural role and its presence is essential for fluoride channel function. Fluoride-specific ion channel. Important for reducing fluoride concentration in the cell, thus reducing its toxicity. The protein is Fluoride-specific ion channel FluC 1 of Nitrobacter hamburgensis (strain DSM 10229 / NCIMB 13809 / X14).